The sequence spans 311 residues: Deacetoxycephalosporin C synthase (311 aa).

Residues 154-267 (DCEPLLRFRY…RTSSVFFLRP (114 aa)) form the Fe2OG dioxygenase domain.

It belongs to the iron/ascorbate-dependent oxidoreductase family. Fe cation serves as cofactor. The cofactor is L-ascorbate.

It catalyses the reaction penicillin N + 2-oxoglutarate + O2 = deacetoxycephalosporin C + succinate + CO2 + H2O. It participates in antibiotic biosynthesis; cephalosporin C biosynthesis. Catalyzes the step from penicillin N to deacetoxy-cephalosporin C. The sequence is that of Deacetoxycephalosporin C synthase (cefE) from Streptomyces clavuligerus.